The sequence spans 455 residues: Homogentisate 1,2-dioxygenase (455 aa).

His308 serves as the catalytic Proton acceptor. Fe cation-binding residues include His351 and Glu357. The homogentisate site is built by Tyr366 and His387. His387 serves as a coordination point for Fe cation.

Belongs to the homogentisate dioxygenase family. In terms of assembly, hexamer; dimer of trimers. It depends on Fe cation as a cofactor.

It catalyses the reaction homogentisate + O2 = 4-maleylacetoacetate + H(+). Its pathway is amino-acid degradation; L-phenylalanine degradation; acetoacetate and fumarate from L-phenylalanine: step 4/6. Involved in the catabolism of homogentisate (2,5-dihydroxyphenylacetate or 2,5-OH-PhAc), a central intermediate in the degradation of phenylalanine and tyrosine. Catalyzes the oxidative ring cleavage of the aromatic ring of homogentisate to yield maleylacetoacetate. The sequence is that of Homogentisate 1,2-dioxygenase from Xanthomonas campestris pv. campestris (strain 8004).